The sequence spans 300 residues: Cation-efflux pump FieF (300 aa).

The helical transmembrane segment at 24–44 (LLIKIFAWWYTGSVSILAALV) threads the bilayer. Residues D45 and D49 each contribute to the Zn(2+) site. Helical transmembrane passes span 82 to 102 (AALAQSMFISGSALFLFLTSI) and 114 to 134 (PGVGIGVTVIALICTIILVTF). Zn(2+)-binding residues include H153 and D157. 2 consecutive transmembrane segments (helical) span residues 156–176 (SDVMMNGAILIALGLSWYGWH) and 178–198 (ADALFALGIGIYILYSALRMG).

It belongs to the cation diffusion facilitator (CDF) transporter (TC 2.A.4) family. FieF subfamily. Homodimer.

The protein resides in the cell inner membrane. It carries out the reaction Zn(2+)(in) + H(+)(out) = Zn(2+)(out) + H(+)(in). It catalyses the reaction Cd(2+)(in) + H(+)(out) = Cd(2+)(out) + H(+)(in). The catalysed reaction is Fe(2+)(in) + H(+)(out) = Fe(2+)(out) + H(+)(in). Divalent metal cation transporter which exports Zn(2+), Cd(2+) and possibly Fe(2+). May be involved in zinc and iron detoxification by efflux. This chain is Cation-efflux pump FieF, found in Salmonella enteritidis PT4 (strain P125109).